The chain runs to 150 residues: MANRFTSSDQTQETHGHHVDKHSFSGRQRHPSMGVHSFNEYMNEYPEAGPLVQEEEDDMESSSYHATQEDIGDDDSRSESTRNRSSQHTGRVNFSSLGGLGSIFGGKKSRSKSANGTQKKNANNNEEQLDEEEQNDPYLDRDISLLGSTI.

A compositionally biased stretch (polar residues) spans 1–11; sequence MANRFTSSDQT. The disordered stretch occupies residues 1–150; that stretch reads MANRFTSSDQ…RDISLLGSTI (150 aa). Over residues 12-23 the composition is skewed to basic and acidic residues; it reads QETHGHHVDKHS. The span at 83-93 shows a compositional bias: polar residues; sequence NRSSQHTGRVN.

It localises to the cytoplasm. The protein localises to the nucleus. Functionally, has a role in meiosis. This is Meiotically up-regulated gene 108 protein (mug108) from Schizosaccharomyces pombe (strain 972 / ATCC 24843) (Fission yeast).